The chain runs to 405 residues: Cysteine desulfurase IscS (405 aa).

N156 serves as a coordination point for pyridoxal 5'-phosphate. K207 carries the N6-(pyridoxal phosphate)lysine modification. The active-site Cysteine persulfide intermediate is the C329. C329 contacts [2Fe-2S] cluster.

Belongs to the class-V pyridoxal-phosphate-dependent aminotransferase family. NifS/IscS subfamily. As to quaternary structure, homodimer. Forms a heterotetramer with IscU, interacts with other sulfur acceptors. Pyridoxal 5'-phosphate is required as a cofactor.

Its subcellular location is the cytoplasm. It carries out the reaction (sulfur carrier)-H + L-cysteine = (sulfur carrier)-SH + L-alanine. Its pathway is cofactor biosynthesis; iron-sulfur cluster biosynthesis. Master enzyme that delivers sulfur to a number of partners involved in Fe-S cluster assembly, tRNA modification or cofactor biosynthesis. Catalyzes the removal of elemental sulfur atoms from cysteine to produce alanine. Functions as a sulfur delivery protein for Fe-S cluster synthesis onto IscU, an Fe-S scaffold assembly protein, as well as other S acceptor proteins. This is Cysteine desulfurase IscS from Dechloromonas aromatica (strain RCB).